The sequence spans 184 residues: Inactive ribonuclease-like protein 9 (184 aa).

A signal peptide spans 1–25; it reads MKPLVIKFAWPLPLLLLLLLPPKLQ. Cystine bridges form between Cys93/Cys148, Cys111/Cys163, and Cys118/Cys125. Asn147 and Asn179 each carry an N-linked (GlcNAc...) asparagine glycan.

It belongs to the pancreatic ribonuclease family.

The protein localises to the secreted. Functionally, does not exhibit any ribonuclease activity. This chain is Inactive ribonuclease-like protein 9 (Rnase9), found in Mus musculus (Mouse).